The chain runs to 312 residues: MLQYQIDRIDHQVSNDRSQTGVFLIGPLERGQATTLGNSLRRVLMGGLEGSAVTAVRIAGVNHEYATIPGVREDVLDILLNCKQISVDSRSQELEIGRLVVTGPADVKAKDIQFSSQVEVVDGDRPIATVQEGHNLELEIHVERGVGYRPVDRKNEETSAIDLLQIDAVFMPINRVNFTIDETAVAEGGSTRERLKMELVTDGSTSPDDALAEAANQLIELFQPLATVSMVEEIPEEPEPAAEAQIPLEELNLSVRAYNCLKRAQVNSVSDLMGFSYEDLLEIKNFGSKSADEVIEALERIGISIPQSRTSA.

The segment at 1-229 (MLQYQIDRID…ELFQPLATVS (229 aa)) is alpha N-terminal domain (alpha-NTD). Residues 239 to 312 (EPAAEAQIPL…ISIPQSRTSA (74 aa)) are alpha C-terminal domain (alpha-CTD).

Belongs to the RNA polymerase alpha chain family. As to quaternary structure, in cyanobacteria the RNAP catalytic core is composed of 2 alpha, 1 beta, 1 beta', 1 gamma and 1 omega subunit. When a sigma factor is associated with the core the holoenzyme is formed, which can initiate transcription.

It catalyses the reaction RNA(n) + a ribonucleoside 5'-triphosphate = RNA(n+1) + diphosphate. DNA-dependent RNA polymerase catalyzes the transcription of DNA into RNA using the four ribonucleoside triphosphates as substrates. This is DNA-directed RNA polymerase subunit alpha from Prochlorococcus marinus (strain NATL1A).